We begin with the raw amino-acid sequence, 359 residues long: CMP-N-acetylneuraminate-poly-alpha-2,8-sialyltransferase (359 aa).

Over 1–7 the chain is Cytoplasmic; the sequence is MRSIRKR. Residues 8 to 20 form a helical; Signal-anchor for type II membrane protein membrane-spanning segment; the sequence is WTICTISLLLIFY. At 21-359 the chain is on the lumenal side; sequence KTKEIARTEE…KLTTGKCMKQ (339 aa). 3 N-linked (GlcNAc...) asparagine glycosylation sites follow: asparagine 50, asparagine 74, and asparagine 119. 2 disulfide bridges follow: cysteine 142/cysteine 292 and cysteine 156/cysteine 356. CMP-N-acetyl-beta-neuraminate is bound by residues asparagine 147 and asparagine 170. N-linked (GlcNAc...) asparagine glycans are attached at residues asparagine 204 and asparagine 219. Serine 279, threonine 280, glycine 281, and tryptophan 301 together coordinate CMP-N-acetyl-beta-neuraminate. Residue histidine 331 is the Proton donor/acceptor of the active site.

It belongs to the glycosyltransferase 29 family. Post-translationally, autopolysialylated.

It localises to the golgi apparatus membrane. Its subcellular location is the secreted. The enzyme catalyses [N-acetyl-alpha-D-neuraminosyl-(2-&gt;8)](n) + CMP-N-acetyl-beta-neuraminate = [N-acetyl-alpha-D-neuraminosyl-(2-&gt;8)](n+1) + CMP + H(+). The protein operates within protein modification; protein glycosylation. Catalyzes the transfer of a sialic acid from a CMP-linked sialic acid donor onto a terminal alpha-2,3-, alpha-2,6-, or alpha-2,8-linked sialic acid of an N-linked glycan protein acceptor through alpha-2,8-linkages. Therefore, participates in polysialic acid synthesis on various sialylated N-acetyllactosaminyl oligosaccharides, including NCAM1 N-glycans, FETUB N-glycans and AHSG. It is noteworthy that alpha-2,3-linked sialic acid is apparently a better acceptor than alpha-2,6-linked sialic acid. This Cricetulus griseus (Chinese hamster) protein is CMP-N-acetylneuraminate-poly-alpha-2,8-sialyltransferase.